We begin with the raw amino-acid sequence, 713 residues long: Phospholipase A1 PLIP2, chloroplastic (713 aa).

The N-terminal 32 residues, 1 to 32 (MDSLCLNSGLHGVIPAITAVGNGGCGGVVEVR), are a transit peptide targeting the chloroplast. Disordered stretches follow at residues 118-140 (WKHE…DEEV) and 232-261 (ALKA…EKNK). Residues 122–140 (EEEDDDEVEDEDGDEDEEV) are compositionally biased toward acidic residues. The GXSXG motif lies at 426–430 (GHSLG). Ser-428 functions as the Acyl-ester intermediate in the catalytic mechanism. Active-site charge relay system residues include Asp-489 and His-608.

It belongs to the AB hydrolase superfamily. Lipase family.

The protein localises to the plastid. It is found in the chloroplast membrane. Its subcellular location is the chloroplast stroma. The catalysed reaction is a 1,2-diacyl-3-O-(beta-D-galactosyl)-sn-glycerol + 2 H2O = 3-beta-D-galactosyl-sn-glycerol + 2 a fatty acid + 2 H(+). The enzyme catalyses a 1,2-diacyl-sn-glycero-3-phosphocholine + H2O = a 2-acyl-sn-glycero-3-phosphocholine + a fatty acid + H(+). It catalyses the reaction 1-hexadecanoyl-2-(9Z-octadecenoyl)-sn-glycero-3-phosphocholine + H2O = 2-(9Z-octadecenoyl)-sn-glycero-3-phosphocholine + hexadecanoate + H(+). It carries out the reaction 1,2-di-(9Z-octadecenoyl)-sn-glycero-3-phosphocholine + H2O = 2-(9Z-octadecenoyl)-sn-glycero-3-phosphocholine + (9Z)-octadecenoate + H(+). The catalysed reaction is 1-octadecanoyl-2-(9Z-octadecenoyl)-sn-glycero-3-phosphocholine + H2O = 2-(9Z-octadecenoyl)-sn-glycero-3-phosphocholine + octadecanoate + H(+). The enzyme catalyses 1-octadecanoyl-2-(9Z,12Z)-octadecadienoyl-sn-glycero-3-phosphocholine + H2O = 2-(9Z,12Z-octadecadienoyl)-sn-glycero-3-phosphocholine + octadecanoate + H(+). It catalyses the reaction 1,2-di-(9Z,12Z-octadecadienoyl)-sn-glycero-3-phosphocholine + H2O = 2-(9Z,12Z-octadecadienoyl)-sn-glycero-3-phosphocholine + (9Z,12Z)-octadecadienoate + H(+). It carries out the reaction 1-(9Z-octadecenoyl)-2-hexadecanoyl-sn-glycero-3-phosphocholine + H2O = 2-hexadecanoyl-sn-glycero-3-phosphocholine + (9Z)-octadecenoate + H(+). Its function is as follows. Sn-1-specific phospholipase A1 that catalyzes the initial step of oxylipins and jasmonate (JA) biosynthesis. Hydrolyzes polyunsaturated acyl groups preferentially from chloroplastic monogalactosyldiacylglycerol (MGDG). May function downstream of abscisic acid (ABA) and provide a link between ABA-mediated abiotic stress responses and oxylipin and JA signalings. In vitro, possesses broad substrate specificity. Can hydrolyze the galactolipids monogalactosyldiacylglycerol (MGDG) and digalactosyldiacylglycerol (DGDG), the sulfolipid sulfoquinovosyldiacylglycerol (SQDG), and the phoshpolipids phosphatidylcholine (PC), and phosphatidylglycerol (PG). This Arabidopsis thaliana (Mouse-ear cress) protein is Phospholipase A1 PLIP2, chloroplastic.